Here is a 164-residue protein sequence, read N- to C-terminus: Ubiquitin-fold modifier-conjugating enzyme 1 (164 aa).

Cysteine 116 serves as the catalytic Glycyl thioester intermediate.

It belongs to the ubiquitin-conjugating enzyme family. UFC1 subfamily.

In terms of biological role, E2-like enzyme which forms an intermediate with UFM1 via a thioester linkage. In Drosophila erecta (Fruit fly), this protein is Ubiquitin-fold modifier-conjugating enzyme 1.